A 245-amino-acid chain; its full sequence is AP-1-like transcription factor YAP5 (245 aa).

Residues 34–47 (LPHRAAQRRKRVHR) are compositionally biased toward basic residues. The segment at 34 to 77 (LPHRAAQRRKRVHRLHEDYETEENDEELQKKKRQNRDAQRAYRE) is disordered. Positions 58-121 (DEELQKKKRQ…QAKESENHAL (64 aa)) constitute a bZIP domain. Positions 63–82 (KKKRQNRDAQRAYRERKNNK) are basic motif. Residues 68 to 77 (NRDAQRAYRE) show a composition bias toward basic and acidic residues. Residues 86–114 (LEETIESLSKVVKNYETKLNRLQNELQAK) form a leucine-zipper region.

The protein belongs to the bZIP family. YAP subfamily. Homodimer.

The protein resides in the cytoplasm. Its subcellular location is the nucleus. Transcription activator involved in the regulation of genes expressed in response to environmental changes and metabolic requirements. According to genome-wide promoter binding and gene expression studies it is a coregulator for the expression of ribosomal genes, while its own expression is induced by the cell cycle specific activator SBF (SWI4-SWI6). This chain is AP-1-like transcription factor YAP5 (YAP5), found in Saccharomyces cerevisiae (strain ATCC 204508 / S288c) (Baker's yeast).